Consider the following 590-residue polypeptide: Leukocyte immunoglobulin-like receptor subfamily B member 5 (590 aa).

The N-terminal stretch at 1-23 (MTLTLSVLICLGLSVGPRTCVQA) is a signal peptide. Topologically, residues 24–458 (GTLPKPTLWA…PQSGLGRHLG (435 aa)) are extracellular. Ig-like C2-type domains are found at residues 27-116 (PKPT…LELV), 111-228 (DPLE…SLLI), 224-313 (PSLL…DPLD), and 337-418 (GENV…LVVS). Cys-49 and Cys-98 are disulfide-bonded. Asn-139 carries N-linked (GlcNAc...) asparagine glycosylation. Intrachain disulfides connect Cys-144–Cys-195 and Cys-244–Cys-295. N-linked (GlcNAc...) asparagine glycans are attached at residues Asn-279 and Asn-339. The cysteines at positions 344 and 395 are disulfide-linked. Residues 416–433 (VVSGPSGDPSLSPTGSTP) show a composition bias toward low complexity. The tract at residues 416-449 (VVSGPSGDPSLSPTGSTPTPGPEDQPLTPTGLDP) is disordered. A helical transmembrane segment spans residues 459–479 (VVTGVSVAFVLLLFLLLFLLL). Topologically, residues 480–590 (RHRHQSKHRT…PSIYAPLAIH (111 aa)) are cytoplasmic. Disordered stretches follow at residues 488–514 (RTSA…KRAS) and 529–550 (KDTQ…EAPQ). Ser-514 is modified (phosphoserine). The short motif at 552 to 557 (VTYAQL) is the ITIM motif 1 element. Basic and acidic residues predominate over residues 562–578 (LRREATEPPPSQEREPP). The disordered stretch occupies residues 562–590 (LRREATEPPPSQEREPPAEPSIYAPLAIH). The ITIM motif 2 motif lies at 582 to 587 (SIYAPL).

In terms of tissue distribution, detected in a natural killer (NK) cells.

It is found in the membrane. In terms of biological role, may act as receptor for class I MHC antigens. The chain is Leukocyte immunoglobulin-like receptor subfamily B member 5 (LILRB5) from Homo sapiens (Human).